A 349-amino-acid chain; its full sequence is UDP-N-acetylenolpyruvoylglucosamine reductase (349 aa).

Residues 26-197 (FDARARVAAR…VAVTFRLPKA (172 aa)) enclose the FAD-binding PCMH-type domain. Residue Arg173 is part of the active site. Ser249 serves as the catalytic Proton donor. Residue Glu345 is part of the active site.

Belongs to the MurB family. It depends on FAD as a cofactor.

Its subcellular location is the cytoplasm. The enzyme catalyses UDP-N-acetyl-alpha-D-muramate + NADP(+) = UDP-N-acetyl-3-O-(1-carboxyvinyl)-alpha-D-glucosamine + NADPH + H(+). Its pathway is cell wall biogenesis; peptidoglycan biosynthesis. Functionally, cell wall formation. This chain is UDP-N-acetylenolpyruvoylglucosamine reductase, found in Burkholderia pseudomallei (strain K96243).